The following is a 522-amino-acid chain: Lysophospholipid acyltransferase LPCAT4 (522 aa).

2 helical membrane passes run 43–63 (ILGFTLFPLRFLLAAIFLFLM) and 92–112 (HLIYLLSRTMFFMCGFHWITI). The short motif at 130-135 (HSTFFD) is the HXXXXD motif element. N-linked (GlcNAc...) asparagine glycosylation is found at Asn166 and Asn517. The tract at residues 496–522 (GRRKPPHIQQNGGCSGKNNPRNQSKMD) is disordered. A compositionally biased stretch (polar residues) spans 503–522 (IQQNGGCSGKNNPRNQSKMD).

It belongs to the 1-acyl-sn-glycerol-3-phosphate acyltransferase family.

The protein localises to the endoplasmic reticulum membrane. The enzyme catalyses a 1-acyl-sn-glycero-3-phosphoethanolamine + an acyl-CoA = a 1,2-diacyl-sn-glycero-3-phosphoethanolamine + CoA. It catalyses the reaction a 1-O-(1Z-alkenyl)-sn-glycero-3-phosphoethanolamine + an acyl-CoA = a 1-O-(1Z-alkenyl)-2-acyl-sn-glycero-3-phosphoethanolamine + CoA. The catalysed reaction is a 1-acyl-sn-glycero-3-phosphocholine + an acyl-CoA = a 1,2-diacyl-sn-glycero-3-phosphocholine + CoA. It carries out the reaction a 1-O-alkyl-sn-glycero-3-phosphocholine + acetyl-CoA = a 1-O-alkyl-2-acetyl-sn-glycero-3-phosphocholine + CoA. The enzyme catalyses a 1-acyl-sn-glycero-3-phospho-L-serine + an acyl-CoA = a 1,2-diacyl-sn-glycero-3-phospho-L-serine + CoA. It participates in lipid metabolism; phospholipid metabolism. Functionally, displays acyl-CoA-dependent lysophospholipid acyltransferase activity with a subset of lysophospholipids as substrates. Prefers long chain acyl-CoAs (C16, C18) as acyl donors. The protein is Lysophospholipid acyltransferase LPCAT4 (lpcat4) of Xenopus tropicalis (Western clawed frog).